The chain runs to 194 residues: Peptidyl-tRNA hydrolase (194 aa).

Residue Y16 coordinates tRNA. Residue H21 is the Proton acceptor of the active site. F67, N69, and N115 together coordinate tRNA.

Belongs to the PTH family. In terms of assembly, monomer.

It is found in the cytoplasm. The catalysed reaction is an N-acyl-L-alpha-aminoacyl-tRNA + H2O = an N-acyl-L-amino acid + a tRNA + H(+). In terms of biological role, hydrolyzes ribosome-free peptidyl-tRNAs (with 1 or more amino acids incorporated), which drop off the ribosome during protein synthesis, or as a result of ribosome stalling. Functionally, catalyzes the release of premature peptidyl moieties from peptidyl-tRNA molecules trapped in stalled 50S ribosomal subunits, and thus maintains levels of free tRNAs and 50S ribosomes. This is Peptidyl-tRNA hydrolase from Salmonella paratyphi B (strain ATCC BAA-1250 / SPB7).